We begin with the raw amino-acid sequence, 61 residues long: Large ribosomal subunit protein uL30 (61 aa).

This sequence belongs to the universal ribosomal protein uL30 family. In terms of assembly, part of the 50S ribosomal subunit.

In Lactobacillus delbrueckii subsp. bulgaricus (strain ATCC 11842 / DSM 20081 / BCRC 10696 / JCM 1002 / NBRC 13953 / NCIMB 11778 / NCTC 12712 / WDCM 00102 / Lb 14), this protein is Large ribosomal subunit protein uL30.